The chain runs to 306 residues: Curved DNA-binding protein (306 aa).

Residues 5–69 (DYYAIMGVKP…QRRAEYDQMW (65 aa)) form the J domain.

It is found in the cytoplasm. Its subcellular location is the nucleoid. Its function is as follows. DNA-binding protein that preferentially recognizes a curved DNA sequence. It is probably a functional analog of DnaJ; displays overlapping activities with DnaJ, but functions under different conditions, probably acting as a molecular chaperone in an adaptive response to environmental stresses other than heat shock. Lacks autonomous chaperone activity; binds native substrates and targets them for recognition by DnaK. Its activity is inhibited by the binding of CbpM. This Escherichia coli O8 (strain IAI1) protein is Curved DNA-binding protein.